Reading from the N-terminus, the 266-residue chain is Undecaprenyl-diphosphatase 1 (266 aa).

A run of 8 helical transmembrane segments spans residues 1–21, 39–59, 83–103, 113–133, 141–161, 189–209, 218–238, and 244–264; these read MSII…FLPI, QGLA…VIYF, SKLG…GLLL, SAWV…YADA, IYQL…VAMI, FLLA…ELAL, TLLL…YMFL, and MGML…IVFL.

It belongs to the UppP family.

The protein localises to the cell inner membrane. It catalyses the reaction di-trans,octa-cis-undecaprenyl diphosphate + H2O = di-trans,octa-cis-undecaprenyl phosphate + phosphate + H(+). Functionally, catalyzes the dephosphorylation of undecaprenyl diphosphate (UPP). Confers resistance to bacitracin. In Pseudoalteromonas translucida (strain TAC 125), this protein is Undecaprenyl-diphosphatase 1.